The chain runs to 264 residues: 3-methyl-2-oxobutanoate hydroxymethyltransferase (264 aa).

Residues Asp45 and Asp84 each coordinate Mg(2+). Residues 45 to 46 (DS), Asp84, and Lys112 contribute to the 3-methyl-2-oxobutanoate site. Glu114 is a binding site for Mg(2+). Glu181 functions as the Proton acceptor in the catalytic mechanism.

It belongs to the PanB family. As to quaternary structure, homodecamer; pentamer of dimers. It depends on Mg(2+) as a cofactor.

It is found in the cytoplasm. The enzyme catalyses 3-methyl-2-oxobutanoate + (6R)-5,10-methylene-5,6,7,8-tetrahydrofolate + H2O = 2-dehydropantoate + (6S)-5,6,7,8-tetrahydrofolate. Its pathway is cofactor biosynthesis; (R)-pantothenate biosynthesis; (R)-pantoate from 3-methyl-2-oxobutanoate: step 1/2. Functionally, catalyzes the reversible reaction in which hydroxymethyl group from 5,10-methylenetetrahydrofolate is transferred onto alpha-ketoisovalerate to form ketopantoate. In Alteromonas mediterranea (strain DSM 17117 / CIP 110805 / LMG 28347 / Deep ecotype), this protein is 3-methyl-2-oxobutanoate hydroxymethyltransferase.